The following is a 499-amino-acid chain: Neuronal acetylcholine receptor subunit alpha-3 (499 aa).

A signal peptide spans 1–25; the sequence is MGVVLPPPPLSMLMLVLMLLPVASA. The Extracellular segment spans residues 26–244; it reads SEAEHRLFQY…PLFYTINLII (219 aa). Residues Asn-49 and Asn-166 are each glycosylated (N-linked (GlcNAc...) asparagine). Disulfide bonds link Cys-153–Cys-167 and Cys-217–Cys-218. A helical transmembrane segment spans residues 245–260; sequence PCLLISFLTVLVFYLP. Residues 261 to 262 are Cytoplasmic-facing; the sequence is SD. Residues 263–279 form a helical membrane-spanning segment; it reads CGEKVTLCISVLLSLTV. Residue Glu-265 coordinates Na(+). The Extracellular segment spans residues 280–301; that stretch reads FLLVITETIPSTSLVIPLIGEY. Residues 302-320 form a helical membrane-spanning segment; sequence LLFTMIFVTLSIVITVFVL. Residues 321–468 lie on the Cytoplasmic side of the membrane; the sequence is NVHYRTPTTH…QDDWKYVAMV (148 aa). Phosphoserine is present on residues Ser-407 and Ser-410. Residues 469 to 487 traverse the membrane as a helical segment; the sequence is IDRIFLWVFILVCILGTAG. The Extracellular portion of the chain corresponds to 488 to 499; sequence LFLQPLMARDDT.

This sequence belongs to the ligand-gated ion channel (TC 1.A.9) family. Acetylcholine receptor (TC 1.A.9.1) subfamily. Alpha-3/CHRNA3 sub-subfamily. Neuronal AChR is composed of two different types of subunits: alpha and beta. CHRNA3/Alpha-3 subunit can be combined to CHRNB2/beta-2 or CHRNB4/beta-4 to give rise to functional receptors. Part of a complex composed of STUB1/CHIP, VCP/p97, CHRNA3, and UBXN2A that modulates the ubiquitination and endoplasmic reticulum-associated degradation (ERAD) of CHRNA3. Within the complex UBXN2A acts as a scaffold protein required for the interaction of CHRNA3 with VCP/p97, this interaction also inhibits CHRNA3 ubiquitination by STUB1/CHIP and subsequently ERAD. Interacts with UBXN2A (via SEP domain), the interaction is required for the interaction of CHRNA3 in the STUB1:VCP:UBXN2A complex. Interacts with RIC3; which is required for proper folding and assembly. Interacts with LYPD6. In terms of processing, ubiquitinated; by STUB1/CHIP and thereafter degraded by the 26S proteosome complex. In terms of tissue distribution, expressed in the brain (at protein level).

The protein resides in the synaptic cell membrane. It localises to the cell membrane. Its subcellular location is the endoplasmic reticulum. It is found in the golgi apparatus. It catalyses the reaction K(+)(in) = K(+)(out). The catalysed reaction is Na(+)(in) = Na(+)(out). The enzyme catalyses Ca(2+)(in) = Ca(2+)(out). Its activity is regulated as follows. Activated by a myriad of ligands such as acetylcholine, cytisine, nicotine, choline and epibatidine. The heteropentamer CHRNA3:CHRNB2 activity is blocked by alpha-conotoxins ImI, ImII, PnIA, GID and MII. The heteropentamer CHRNA3:CHRNB4 activity is blocked by the alpha-conotoxin ImI. Its function is as follows. Component of neuronal acetylcholine receptors (nAChRs) that function as pentameric, ligand-gated cation channels with high calcium permeability among other activities. nAChRs are excitatory neurotrasnmitter receptors formed by a collection of nAChR subunits known to mediate synaptic transmission in the nervous system and the neuromuscular junction. Each nAchR subunit confers differential attributes to channel properties, including activation, deactivation and desensitization kinetics, pH sensitivity, cation permeability, and binding to allosteric modulators. CHRNA3 forms heteropentameric neuronal acetylcholine receptors with CHRNA5, CHRNB2 and CHRNB4. CHRNA3:CHRNB4 being predominant in neurons of the autonomic ganglia, it is known as ganglionic nicotinic receptor. CHRNA3:CHRNB4 or CHRNA3:CHRNA5:CHRNB4 play also an important role in the habenulo-interpeduncular tract, modulating the mesolimbic dopamine system and affecting reward circuits and addiction. Hypothalamic CHRNA3:CHRNB4 nAChR activation by nicotine leads to activation of POMC neurons and a decrease in food intake. Also expressed in the urothelium where it modulates reflex bladder activity by increasing intracellular calcium through extracellular influx and basal ATP release. This is Neuronal acetylcholine receptor subunit alpha-3 (Chrna3) from Mus musculus (Mouse).